Here is a 20-residue protein sequence, read N- to C-terminus: Alkaline phosphatase (20 aa).

The interval 1–20 (TDMLAVSVSSTDAIGHKYGT) is disordered.

Homodimer; may be disulfide-linked. In terms of processing, the N-terminus is blocked.

The enzyme catalyses a phosphate monoester + H2O = an alcohol + phosphate. Completely inhibited by thiol-reducing agents, such as DTT and 2-mercaptoethanol. Activity was also inhibited by sodium orthovanadate, sodium molybdate, N-ethylmaleimide, EDTA and zinc ion, but was not inhibited by okadaic acid. In terms of biological role, acts against tyrosine-phosphatases. This Prevotella intermedia protein is Alkaline phosphatase.